The chain runs to 145 residues: MNAYDAYMKEIAQQMRGELTQNGFTSLETSEAVSEYMNQVNADDTTFVVINSTCGCAAGLARPAAVAVATQNEHRPTNTVTVFAGQDKEATATMREFIQQAPSSPSYALFKGQDLVYFMPREFIEGRDINDIAMDLKDAFDENCK.

This sequence belongs to the bacilliredoxin family.

The polypeptide is Bacilliredoxin MW1318 (Staphylococcus aureus (strain MW2)).